Here is an 89-residue protein sequence, read N- to C-terminus: UPF0473 protein Helmi_02360 (89 aa).

The protein belongs to the UPF0473 family.

The sequence is that of UPF0473 protein Helmi_02360 from Heliobacterium modesticaldum (strain ATCC 51547 / Ice1).